Reading from the N-terminus, the 493-residue chain is Glutamate--tRNA ligase (493 aa).

Residues 10 to 20 (PSPTGDPHVGT) carry the 'HIGH' region motif. Residues 251–255 (KLSKR) carry the 'KMSKS' region motif. Position 254 (lysine 254) interacts with ATP.

Belongs to the class-I aminoacyl-tRNA synthetase family. Glutamate--tRNA ligase type 1 subfamily. Monomer.

Its subcellular location is the cytoplasm. It carries out the reaction tRNA(Glu) + L-glutamate + ATP = L-glutamyl-tRNA(Glu) + AMP + diphosphate. Its function is as follows. Catalyzes the attachment of glutamate to tRNA(Glu) in a two-step reaction: glutamate is first activated by ATP to form Glu-AMP and then transferred to the acceptor end of tRNA(Glu). This Pseudomonas syringae pv. syringae (strain B728a) protein is Glutamate--tRNA ligase.